The sequence spans 430 residues: Adenylosuccinate synthetase (430 aa).

GTP-binding positions include 12 to 18 and 40 to 42; these read GDEGKGK and GHT. Asp13 functions as the Proton acceptor in the catalytic mechanism. Mg(2+) is bound by residues Asp13 and Gly40. IMP contacts are provided by residues 13–16, 38–41, Thr128, Arg142, Gln223, Thr238, and Arg302; these read DEGK and NAGH. His41 serves as the catalytic Proton donor. 298 to 304 contributes to the substrate binding site; the sequence is VNTGRKR. GTP-binding positions include Arg304, 330 to 332, and 412 to 414; these read KLD and GVG.

The protein belongs to the adenylosuccinate synthetase family. As to quaternary structure, homodimer. Mg(2+) is required as a cofactor.

The protein resides in the cytoplasm. The enzyme catalyses IMP + L-aspartate + GTP = N(6)-(1,2-dicarboxyethyl)-AMP + GDP + phosphate + 2 H(+). It functions in the pathway purine metabolism; AMP biosynthesis via de novo pathway; AMP from IMP: step 1/2. Functionally, plays an important role in the de novo pathway of purine nucleotide biosynthesis. Catalyzes the first committed step in the biosynthesis of AMP from IMP. This is Adenylosuccinate synthetase from Corynebacterium glutamicum (strain ATCC 13032 / DSM 20300 / JCM 1318 / BCRC 11384 / CCUG 27702 / LMG 3730 / NBRC 12168 / NCIMB 10025 / NRRL B-2784 / 534).